A 1442-amino-acid polypeptide reads, in one-letter code: DNA-binding protein RFX7 (1442 aa).

The tract at residues 1 to 36 is disordered; the sequence is MEEEQQQQQQQQQAQKMQGTEQSAQLPPSAPGALPA. A DNA-binding region (RFX-type winged-helix) is located at residues 112–187; it reads AFSWIRNTLE…YCYSGLRKKA (76 aa). Residues 192 to 197 carry the PxLPxI/L motif motif; the sequence is PSLPNL. Disordered stretches follow at residues 406–426, 485–514, and 929–1001; these read MQSV…GDRS, SAGT…KNGS, and SVTP…SVPP. Residues 935 to 947 show a composition bias toward pro residues; that stretch reads TPTPTPTPTPTLT. Positions 957-995 are enriched in polar residues; the sequence is GTQSLSRESPCSRLAQTTPVDSALGSSRHTPVGTPHSNC.

It belongs to the RFX family.

Its subcellular location is the nucleus. Transcription factor. Acts as a transcriptional activator by binding to promoter regions of target genes. Plays a role in natural killer (NK) cell maintenance and immunity. Plays a role in the process of ciliogenesis in the neural tube and neural tube closure by regulating the expression of RFX4. The sequence is that of DNA-binding protein RFX7 from Xenopus laevis (African clawed frog).